The following is a 353-amino-acid chain: Histidinol-phosphate aminotransferase 1 (353 aa).

Lys211 carries the post-translational modification N6-(pyridoxal phosphate)lysine.

Belongs to the class-II pyridoxal-phosphate-dependent aminotransferase family. Histidinol-phosphate aminotransferase subfamily. Homodimer. Requires pyridoxal 5'-phosphate as cofactor.

The catalysed reaction is L-histidinol phosphate + 2-oxoglutarate = 3-(imidazol-4-yl)-2-oxopropyl phosphate + L-glutamate. It functions in the pathway amino-acid biosynthesis; L-histidine biosynthesis; L-histidine from 5-phospho-alpha-D-ribose 1-diphosphate: step 7/9. In Nostoc sp. (strain PCC 7120 / SAG 25.82 / UTEX 2576), this protein is Histidinol-phosphate aminotransferase 1 (hisC1).